The primary structure comprises 154 residues: Myoglobin (154 aa).

The Globin domain maps to 2 to 148; that stretch reads GLSDQEWQQV…FRNDMASKYK (147 aa). His-65 is a nitrite binding site. His-65 serves as a coordination point for O2. Residue His-94 participates in heme b binding.

Belongs to the globin family. Monomeric.

It localises to the cytoplasm. The protein resides in the sarcoplasm. It catalyses the reaction Fe(III)-heme b-[protein] + nitric oxide + H2O = Fe(II)-heme b-[protein] + nitrite + 2 H(+). The enzyme catalyses H2O2 + AH2 = A + 2 H2O. Monomeric heme protein which primary function is to store oxygen and facilitate its diffusion within muscle tissues. Reversibly binds oxygen through a pentacoordinated heme iron and enables its timely and efficient release as needed during periods of heightened demand. Depending on the oxidative conditions of tissues and cells, and in addition to its ability to bind oxygen, it also has a nitrite reductase activity whereby it regulates the production of bioactive nitric oxide. Under stress conditions, like hypoxia and anoxia, it also protects cells against reactive oxygen species thanks to its pseudoperoxidase activity. The sequence is that of Myoglobin (MB) from Cerorhinca monocerata (Rhinoceros auklet).